Consider the following 116-residue polypeptide: MTSSSMLTKKDWSAHARRALSPTEIVTRLADLQGWALSGDGAAVAIEKTYRFANYYETISFVNAVAFIANAQDHHPDLSVHYDRCVVRLNTHDVKGISTTDLECAARFDALLAASE.

This sequence belongs to the pterin-4-alpha-carbinolamine dehydratase family.

It carries out the reaction (4aS,6R)-4a-hydroxy-L-erythro-5,6,7,8-tetrahydrobiopterin = (6R)-L-erythro-6,7-dihydrobiopterin + H2O. The chain is Putative pterin-4-alpha-carbinolamine dehydratase from Paracidovorax citrulli (strain AAC00-1) (Acidovorax citrulli).